Reading from the N-terminus, the 136-residue chain is Large-conductance mechanosensitive channel (136 aa).

2 helical membrane passes run 10–30 and 76–96; these read FAMRGNVVDLAVGVIIGAAFG and GAFIQNIFDFVIVAFAIFIAI.

It belongs to the MscL family. Homopentamer.

The protein localises to the cell inner membrane. Its function is as follows. Channel that opens in response to stretch forces in the membrane lipid bilayer. May participate in the regulation of osmotic pressure changes within the cell. The polypeptide is Large-conductance mechanosensitive channel (Pectobacterium atrosepticum (strain SCRI 1043 / ATCC BAA-672) (Erwinia carotovora subsp. atroseptica)).